Reading from the N-terminus, the 338-residue chain is Tetraacyldisaccharide 4'-kinase (338 aa).

53–60 (TVGGSGKT) contributes to the ATP binding site.

Belongs to the LpxK family.

The enzyme catalyses a lipid A disaccharide + ATP = a lipid IVA + ADP + H(+). It functions in the pathway glycolipid biosynthesis; lipid IV(A) biosynthesis; lipid IV(A) from (3R)-3-hydroxytetradecanoyl-[acyl-carrier-protein] and UDP-N-acetyl-alpha-D-glucosamine: step 6/6. Transfers the gamma-phosphate of ATP to the 4'-position of a tetraacyldisaccharide 1-phosphate intermediate (termed DS-1-P) to form tetraacyldisaccharide 1,4'-bis-phosphate (lipid IVA). The polypeptide is Tetraacyldisaccharide 4'-kinase (Azorhizobium caulinodans (strain ATCC 43989 / DSM 5975 / JCM 20966 / LMG 6465 / NBRC 14845 / NCIMB 13405 / ORS 571)).